Here is a 66-residue protein sequence, read N- to C-terminus: Small ribosomal subunit protein bS21 (66 aa).

It belongs to the bacterial ribosomal protein bS21 family.

This is Small ribosomal subunit protein bS21 from Rickettsia africae (strain ESF-5).